We begin with the raw amino-acid sequence, 348 residues long: Large ribosomal subunit protein uL3m (348 aa).

Residues 1-40 (MPGWRLLAWAGARVLDRGTGGLGTALGSGNRTDICVLVRS) constitute a mitochondrion transit peptide.

Belongs to the universal ribosomal protein uL3 family. As to quaternary structure, component of the mitochondrial ribosome large subunit (39S) which comprises a 16S rRNA and about 50 distinct proteins.

The protein resides in the mitochondrion. This chain is Large ribosomal subunit protein uL3m (MRPL3), found in Bos taurus (Bovine).